The primary structure comprises 545 residues: Signal peptide peptidase-like 4 (545 aa).

An N-terminal signal peptide occupies residues 1 to 25 (MGTSSPEMAAALLLVMAALAGVAAG). The Lumenal segment spans residues 26-193 (GDIVHQDDEA…PDRPLVDTAE (168 aa)). Residues asparagine 81 and asparagine 147 are each glycosylated (N-linked (GlcNAc...) asparagine). Residues 90–170 (PIDCCDPPTQ…PKDAGNDLQK (81 aa)) enclose the PA domain. A helical membrane pass occupies residues 194-214 (VFLWLMAVGTILCASYWSAWS). The Cytoplasmic portion of the chain corresponds to 215–246 (AREAVIEQEKLLKDGHESSLNLEAGGSSGMVD). A helical transmembrane segment spans residues 247-267 (INMTSAILFVVIASCFLIMLY). At 268 to 276 (KLMSHWFVE) the chain is on the lumenal side. Residues 277 to 297 (LLVVIFCIGGVEGLQTCLVAL) traverse the membrane as a helical segment. Over 298 to 317 (LSRWFKPAAESFVKVPFFGA) the chain is Cytoplasmic. A helical membrane pass occupies residues 318 to 338 (VSYLTIAVCPFCIVFAVIWAV). At 339-343 (YRRMT) the chain is on the lumenal side. Residues 344–364 (YAWIGQDILGIALIVTVIQIV) traverse the membrane as a helical segment. Over 365 to 373 (RIPNLKVGS) the chain is Cytoplasmic. The helical transmembrane segment at 374-394 (VLLSCSFLYDIFWVFISKMWF) threads the bilayer. Aspartate 383 is an active-site residue. The Lumenal segment spans residues 395–427 (HESVMIVVARGDKTDEDGVPMLLKIPRMFDPWG). The chain crosses the membrane as a helical span at residues 428–448 (GFSIIGFGDILLPGLLIAFAL). Residue aspartate 436 is part of the active site. Topologically, residues 449–460 (RYDWAAKKTLQS) are cytoplasmic. A helical transmembrane segment spans residues 461–481 (GYFLWSMVAYGSGLMITYVAL). Over 482-485 (NLMD) the chain is Lumenal. The chain crosses the membrane as a helical span at residues 486-506 (GHGQPALLYIVPFTLGTFIAL). The PAL motif lies at 490 to 492 (PAL). Residues 507–545 (GRKRGELRNLWTRGQPERVCTHMHMQPSPKDTNCDAVSS) lie on the Cytoplasmic side of the membrane.

This sequence belongs to the peptidase A22B family. Glycosylated.

The protein localises to the endosome membrane. Intramembrane-cleaving aspartic protease (I-CLiP) that cleaves type II membrane signal peptides in the hydrophobic plane of the membrane. This chain is Signal peptide peptidase-like 4 (SPPL4), found in Oryza sativa subsp. japonica (Rice).